We begin with the raw amino-acid sequence, 324 residues long: Ribose 1,5-bisphosphate isomerase (324 aa).

Substrate contacts are provided by residues 22–25 (RGAG) and arginine 65. The active-site Proton acceptor is the cysteine 135. Residue 137-139 (SKA) participates in substrate binding. The Proton donor role is filled by aspartate 204. Residue lysine 240 participates in substrate binding.

This sequence belongs to the eIF-2B alpha/beta/delta subunits family. R15P isomerase subfamily.

The catalysed reaction is alpha-D-ribose 1,5-bisphosphate = D-ribulose 1,5-bisphosphate. Functionally, catalyzes the isomerization of ribose 1,5-bisphosphate (R15P) to ribulose 1,5-bisphosphate (RuBP), the CO(2) acceptor and substrate for RubisCO. Functions in an archaeal AMP degradation pathway, together with AMP phosphorylase and RubisCO. The sequence is that of Ribose 1,5-bisphosphate isomerase from Pyrococcus furiosus (strain ATCC 43587 / DSM 3638 / JCM 8422 / Vc1).